We begin with the raw amino-acid sequence, 346 residues long: N(4)-(beta-N-acetylglucosaminyl)-L-asparaginase (346 aa).

The signal sequence occupies residues 1–23 (MARKSNLPVLLVPFLLCQALVRC). Blocked amino end (Ser) is present on Ser-24. N-linked (GlcNAc...) asparagine glycosylation occurs at Asn-38. 2 cysteine pairs are disulfide-bonded: Cys-64–Cys-69 and Cys-163–Cys-179. Thr-206 functions as the Nucleophile in the catalytic mechanism. Residues 234–237 (RVGD) and 257–260 (TGNG) contribute to the substrate site. A disulfide bond links Cys-286 and Cys-306. N-linked (GlcNAc...) asparagine glycosylation is present at Asn-308. Cys-317 and Cys-345 are oxidised to a cystine.

Belongs to the Ntn-hydrolase family. In terms of assembly, heterotetramer of two alpha and two beta chains arranged as a dimer of alpha/beta heterodimers. Cleaved into an alpha and beta chain by autocatalysis; this activates the enzyme. The N-terminal residue of the beta subunit is responsible for the nucleophile hydrolase activity. Post-translationally, N-glycosylated.

The protein resides in the lysosome. The enzyme catalyses N(4)-(beta-N-acetyl-D-glucosaminyl)-L-asparagine + H2O = N-acetyl-beta-D-glucosaminylamine + L-aspartate + H(+). Cleaves the GlcNAc-Asn bond which joins oligosaccharides to the peptide of asparagine-linked glycoproteins. The protein is N(4)-(beta-N-acetylglucosaminyl)-L-asparaginase (AGA) of Homo sapiens (Human).